Consider the following 418-residue polypeptide: 3-isopropylmalate dehydratase large subunit (418 aa).

C298, C358, and C361 together coordinate [4Fe-4S] cluster.

The protein belongs to the aconitase/IPM isomerase family. LeuC type 2 subfamily. Heterodimer of LeuC and LeuD. It depends on [4Fe-4S] cluster as a cofactor.

The enzyme catalyses (2R,3S)-3-isopropylmalate = (2S)-2-isopropylmalate. It functions in the pathway amino-acid biosynthesis; L-leucine biosynthesis; L-leucine from 3-methyl-2-oxobutanoate: step 2/4. Functionally, catalyzes the isomerization between 2-isopropylmalate and 3-isopropylmalate, via the formation of 2-isopropylmaleate. In Thermoanaerobacter sp. (strain X514), this protein is 3-isopropylmalate dehydratase large subunit.